Consider the following 94-residue polypeptide: Co-chaperonin GroES (94 aa).

This sequence belongs to the GroES chaperonin family. In terms of assembly, heptamer of 7 subunits arranged in a ring. Interacts with the chaperonin GroEL.

It is found in the cytoplasm. Functionally, together with the chaperonin GroEL, plays an essential role in assisting protein folding. The GroEL-GroES system forms a nano-cage that allows encapsulation of the non-native substrate proteins and provides a physical environment optimized to promote and accelerate protein folding. GroES binds to the apical surface of the GroEL ring, thereby capping the opening of the GroEL channel. This chain is Co-chaperonin GroES, found in Listeria monocytogenes serotype 4b (strain CLIP80459).